Reading from the N-terminus, the 126-residue chain is Aspartate 1-decarboxylase (126 aa).

The active-site Schiff-base intermediate with substrate; via pyruvic acid is the Ser25. The residue at position 25 (Ser25) is a Pyruvic acid (Ser). Thr57 is a binding site for substrate. The active-site Proton donor is the Tyr58. Gly73–Ala75 contacts substrate.

Belongs to the PanD family. As to quaternary structure, heterooctamer of four alpha and four beta subunits. It depends on pyruvate as a cofactor. Is synthesized initially as an inactive proenzyme, which is activated by self-cleavage at a specific serine bond to produce a beta-subunit with a hydroxyl group at its C-terminus and an alpha-subunit with a pyruvoyl group at its N-terminus.

Its subcellular location is the cytoplasm. It catalyses the reaction L-aspartate + H(+) = beta-alanine + CO2. Its pathway is cofactor biosynthesis; (R)-pantothenate biosynthesis; beta-alanine from L-aspartate: step 1/1. Catalyzes the pyruvoyl-dependent decarboxylation of aspartate to produce beta-alanine. The chain is Aspartate 1-decarboxylase from Yersinia pestis bv. Antiqua (strain Antiqua).